The following is a 462-amino-acid chain: NEDD8-activating enzyme E1 catalytic subunit (462 aa).

The tract at residues 52 to 69 is interaction with ube2m N-terminus; sequence HPDFEASTESLQFLLDTC. ATP contacts are provided by residues 99–123 and 147–170; these read DMDT…GRPK and IQDL…SVIA. 2 interaction with ube2m N-terminus regions span residues 156–160 and 191–216; these read RQFHI and PSSI…LPGM. The interval 226–228 is interaction with nedd8; that stretch reads LYP. Cys236 acts as the Glycyl thioester intermediate in catalysis. Interaction with nae1 regions lie at residues 241–247 and 291–294; these read MPRLPEH and FNIT. The segment at 330–337 is interaction with ube2m N-terminus; that stretch reads IATSAYVP. The interval 351 to 356 is interaction with nedd8; that stretch reads YTYTFE. Positions 367–462 are interaction with ube2m core domain; it reads SQVPQDMQFT…TVLFKLKFIS (96 aa).

Belongs to the ubiquitin-activating E1 family. UBA3 subfamily. Heterodimer of uba3 and nae1. Interacts with nedd8, ube2f and ube2m.

The enzyme catalyses ATP + [NEDD8 protein] + [E1 NEDD8-activating enzyme]-L-cysteine = AMP + diphosphate + [E1 NEDD8-activating enzyme]-S-[NEDD8 protein]-yl-L-cysteine.. It participates in protein modification; protein neddylation. Functionally, catalytic subunit of the dimeric uba3-nae1 E1 enzyme. E1 activates nedd8 by first adenylating its C-terminal glycine residue with ATP, thereafter linking this residue to the side chain of the catalytic cysteine, yielding a nedd8-uba3 thioester and free AMP. E1 finally transfers nedd8 to the catalytic cysteine of ube2m. The chain is NEDD8-activating enzyme E1 catalytic subunit (uba3) from Danio rerio (Zebrafish).